A 385-amino-acid chain; its full sequence is 8-amino-7-oxononanoate synthase (385 aa).

Residue Arg-27 coordinates substrate. 105–106 provides a ligand contact to pyridoxal 5'-phosphate; that stretch reads GY. His-130 lines the substrate pocket. Pyridoxal 5'-phosphate-binding positions include Ser-176, 201 to 204, and 232 to 235; these read DEAH and TMSK. Lys-235 carries the N6-(pyridoxal phosphate)lysine modification. Position 345 (Thr-345) interacts with substrate.

The protein belongs to the class-II pyridoxal-phosphate-dependent aminotransferase family. BioF subfamily. As to quaternary structure, homodimer. It depends on pyridoxal 5'-phosphate as a cofactor.

The catalysed reaction is 6-carboxyhexanoyl-[ACP] + L-alanine + H(+) = (8S)-8-amino-7-oxononanoate + holo-[ACP] + CO2. The protein operates within cofactor biosynthesis; biotin biosynthesis. Catalyzes the decarboxylative condensation of pimeloyl-[acyl-carrier protein] and L-alanine to produce 8-amino-7-oxononanoate (AON), [acyl-carrier protein], and carbon dioxide. The chain is 8-amino-7-oxononanoate synthase from Mycobacterium leprae (strain Br4923).